Here is a 228-residue protein sequence, read N- to C-terminus: UPF0173 metal-dependent hydrolase lin1612 (228 aa).

This sequence belongs to the UPF0173 family.

This Listeria innocua serovar 6a (strain ATCC BAA-680 / CLIP 11262) protein is UPF0173 metal-dependent hydrolase lin1612.